The following is a 226-amino-acid chain: Ribonuclease HII (226 aa).

Residues 29–220 enclose the RNase H type-2 domain; that stretch reads GPVAGVDEAG…VAALLHRVDN (192 aa). The a divalent metal cation site is built by Asp35, Glu36, and Asp129.

It belongs to the RNase HII family. Mn(2+) is required as a cofactor. Mg(2+) serves as cofactor.

Its subcellular location is the cytoplasm. The catalysed reaction is Endonucleolytic cleavage to 5'-phosphomonoester.. In terms of biological role, endonuclease that specifically degrades the RNA of RNA-DNA hybrids. This is Ribonuclease HII from Rhodococcus opacus (strain B4).